Reading from the N-terminus, the 275-residue chain is Large ribosomal subunit protein uL2cz/uL2cy (275 aa).

Disordered regions lie at residues 1 to 26 and 224 to 275; these read MAIH…VKSN and MNPV…RRTK. Polar residues predominate over residues 7–26; sequence KTSTPSTRNGTVDSRQVKSN.

The protein belongs to the universal ribosomal protein uL2 family. As to quaternary structure, part of the 50S ribosomal subunit.

It is found in the plastid. It localises to the chloroplast. In Phaseolus angularis (Azuki bean), this protein is Large ribosomal subunit protein uL2cz/uL2cy (rpl2-A).